The chain runs to 476 residues: UDP-N-acetylmuramate--L-alanine ligase (476 aa).

112-118 contacts ATP; that stretch reads GTHGKTT.

The protein belongs to the MurCDEF family.

It localises to the cytoplasm. The catalysed reaction is UDP-N-acetyl-alpha-D-muramate + L-alanine + ATP = UDP-N-acetyl-alpha-D-muramoyl-L-alanine + ADP + phosphate + H(+). It functions in the pathway cell wall biogenesis; peptidoglycan biosynthesis. Its function is as follows. Cell wall formation. This Magnetococcus marinus (strain ATCC BAA-1437 / JCM 17883 / MC-1) protein is UDP-N-acetylmuramate--L-alanine ligase.